Here is a 452-residue protein sequence, read N- to C-terminus: GTPase Der (452 aa).

2 consecutive EngA-type G domains span residues 4–169 and 177–352; these read PVVA…PPQD and IQMA…EQHR. GTP contacts are provided by residues 10-17, 57-61, 120-123, 183-190, 230-234, and 295-298; these read GRPNVGKS, DTGGL, NKCE, DTAGI, and NKWD. The 86-residue stretch at 353-438 folds into the KH-like domain; sequence RRVTTAVVNE…PVRLFWRGKQ (86 aa).

Belongs to the TRAFAC class TrmE-Era-EngA-EngB-Septin-like GTPase superfamily. EngA (Der) GTPase family. As to quaternary structure, associates with the 50S ribosomal subunit.

GTPase that plays an essential role in the late steps of ribosome biogenesis. This Synechococcus sp. (strain RCC307) protein is GTPase Der.